A 274-amino-acid polypeptide reads, in one-letter code: Hydroxyacylglutathione hydrolase, cytoplasmic isozyme (274 aa).

Positions 59, 61, 63, 64, 121, and 144 each coordinate Zn(2+). Residues Arg153 and 188–190 (HEY) contribute to the substrate site. His188 is a Zn(2+) binding site. Ser257 carries the post-translational modification Phosphoserine. 268 to 271 (RAMK) is a binding site for substrate.

The protein belongs to the metallo-beta-lactamase superfamily. Glyoxalase II family. Zn(2+) serves as cofactor.

Its subcellular location is the cytoplasm. It carries out the reaction an S-(2-hydroxyacyl)glutathione + H2O = a 2-hydroxy carboxylate + glutathione + H(+). The catalysed reaction is (R)-S-lactoylglutathione + H2O = (R)-lactate + glutathione + H(+). It functions in the pathway secondary metabolite metabolism; methylglyoxal degradation; (R)-lactate from methylglyoxal: step 2/2. With respect to regulation, inhibited by various thiol compounds such as glutathione and coenzyme A. Functionally, thiolesterase that catalyzes the hydrolysis of S-D-lactoylglutathione to form glutathione and D-lactic acid. Involved in the metabolism of methylglyoxal, a toxic compound for yeast proliferation, by converting methylglyoxal to lactate via S-D-lactoylglutathione by sequential enzyme reactions catalyzed by glyoxalase I and glyoxalase II. In Saccharomyces cerevisiae (strain ATCC 204508 / S288c) (Baker's yeast), this protein is Hydroxyacylglutathione hydrolase, cytoplasmic isozyme.